The following is a 945-amino-acid chain: Splicing factor, suppressor of white-apricot homolog (945 aa).

2 disordered regions span residues 1–28 and 156–185; these read MYGA…GTGT and DYYD…EENE. Composition is skewed to basic and acidic residues over residues 9 to 21 and 169 to 178; these read AKPE…KEEA and PSKQREKNEA. The stretch at 211-253 is one SURP motif 1 repeat; that stretch reads IIERTANFVCKQGAQFEIMLKAKQARNSQFDFLRFDHYLNPYY. The segment at 271 to 301 is disordered; the sequence is SKNEEKKKSGPTSDNEEEDDEEDGSYLHPSL. Ser-283 carries the phosphoserine modification. The segment covering 284-294 has biased composition (acidic residues); that stretch reads DNEEEDDEEDG. Lys-315 bears the N6-acetyllysine mark. Disordered regions lie at residues 332–355 and 403–448; these read KAQA…PSQV and SSSP…PVAI. The segment covering 335 to 352 has biased composition (low complexity); the sequence is ADSSAPAPPTADGTPAQP. Residues 412–426 show a composition bias toward pro residues; the sequence is VPPPPGTTPPPPPTT. The span at 427–447 shows a compositional bias: low complexity; that stretch reads AEPSSGVTSTTTTTSALAPVA. One copy of the SURP motif 2 repeat lies at 458–498; the sequence is VIDKLAEYVARNGLKFETSVRAKNDQRFEFLQPWHQYNAYY. Disordered stretches follow at residues 512-564, 589-680, and 712-921; these read GSTQ…KSTV, PLEK…QAER, and DTGV…VQSK. The span at 514 to 527 shows a compositional bias: low complexity; it reads TQAASTAEEAPTET. Residues 528 to 540 show a composition bias toward acidic residues; sequence AVEESGEAGEDGA. Basic and acidic residues predominate over residues 589-598; it reads PLEKNRVKLD. Phosphoserine is present on residues Ser-601 and Ser-621. A compositionally biased stretch (low complexity) spans 615–630; the sequence is SSVANPSPAAAPPSVA. Positions 632–686 form a coiled coil; it reads EEKKPQLTQEELEAKQAKQKLEDRLAAAAREKLAQASKESKEKQLQAERKRKAAL. A Phosphothreonine modification is found at Thr-639. Composition is skewed to basic and acidic residues over residues 643–679 and 733–752; these read LEAK…LQAE and KPPE…EERE. 2 stretches are compositionally biased toward basic residues: residues 753 to 787 and 795 to 810; these read KKKK…KAKH and TVRR…RRRA. Basic and acidic residues predominate over residues 811 to 821; the sequence is HSPERRREERS. Residues Ser-829 and Ser-831 each carry the phosphoserine modification. Residues 835-861 are compositionally biased toward basic residues; it reads SRKRTRSRSPHEKKKKRRSRSRTKAKA. Positions 871–894 are enriched in low complexity; it reads QAAQRPSAHSAHSASISPVESRGS. Basic and acidic residues predominate over residues 895–908; sequence SQERSRGVSQEKDG. Residues Ser-899 and Ser-903 each carry the phosphoserine modification. The segment covering 909–920 has biased composition (low complexity); it reads QISSAIVSSVQS.

Its subcellular location is the nucleus. In terms of biological role, plays a role as an alternative splicing regulator. Regulates its own expression at the level of RNA processing. Also regulates the splicing of fibronectin and CD45 genes. May act, at least in part, by interaction with other R/S-containing splicing factors. Represses the splicing of MAPT/Tau exon 10. This Mus musculus (Mouse) protein is Splicing factor, suppressor of white-apricot homolog (Sfswap).